A 213-amino-acid polypeptide reads, in one-letter code: uncharacterized protein (213 aa).

Active-site charge relay system residues include serine 114, aspartate 162, and histidine 194.

Belongs to the AB hydrolase superfamily. AB hydrolase 2 family.

This is an uncharacterized protein from Rickettsia bellii (strain RML369-C).